A 177-amino-acid polypeptide reads, in one-letter code: MSRVGKMPVAIPNGVDVTITEEQISVKGSGGTLSVAQNRLVKIVNKDGKLSFEPADESREANAMSGTIRQLVNNMVVGVSKGFEKKLNLIGVGYKAQASGAKLNLAVGYSHPVNFDMPAGITVATPTPTEIVIKGADRQRVGQLAAEIRAVRPPEPYKGKGIRYSDEKVTIKETKKK.

The protein belongs to the universal ribosomal protein uL6 family. Part of the 50S ribosomal subunit.

Functionally, this protein binds to the 23S rRNA, and is important in its secondary structure. It is located near the subunit interface in the base of the L7/L12 stalk, and near the tRNA binding site of the peptidyltransferase center. This chain is Large ribosomal subunit protein uL6, found in Paracidovorax citrulli (strain AAC00-1) (Acidovorax citrulli).